Here is a 262-residue protein sequence, read N- to C-terminus: MPKLQEMMTIVSQREVASNIFEMVLKGELVEEMDLPGQFLHLAVPNASMLLRRPISISSWDKVAKTCTILYRIGDETSGTYEISKLQSGAKIDVMGPLGNGFPVDEVVSTDKILIVGGGIGVPPLYELAKQLEEKNCQMTILLGFASEKVKILEKEFAELKNVSLKIATDDGSYGTKGHVGMLMEEIDFEVDALYTCGAPAMLKAVAKKYEQLERLYISMESRMACGIGACYACVEHDKEDENHALKVCEDGPVFLGKQLLL.

One can recognise an FAD-binding FR-type domain in the interval 3-104 (KLQEMMTIVS…MGPLGNGFPV (102 aa)). Residues 53–56 (RPIS), 70–72 (LYR), and 79–80 (GT) contribute to the FAD site. Residues C226, C231, C234, and C249 each coordinate [2Fe-2S] cluster.

This sequence belongs to the PyrK family. Heterotetramer of 2 PyrK and 2 PyrD type B subunits. [2Fe-2S] cluster is required as a cofactor. It depends on FAD as a cofactor.

Its pathway is pyrimidine metabolism; UMP biosynthesis via de novo pathway; orotate from (S)-dihydroorotate (NAD(+) route): step 1/1. In terms of biological role, responsible for channeling the electrons from the oxidation of dihydroorotate from the FMN redox center in the PyrD type B subunit to the ultimate electron acceptor NAD(+). This is Dihydroorotate dehydrogenase B (NAD(+)), electron transfer subunit from Lactococcus lactis subsp. lactis (strain IL1403) (Streptococcus lactis).